A 446-amino-acid polypeptide reads, in one-letter code: Exodeoxyribonuclease 7 large subunit (446 aa).

Belongs to the XseA family. Heterooligomer composed of large and small subunits.

It localises to the cytoplasm. It catalyses the reaction Exonucleolytic cleavage in either 5'- to 3'- or 3'- to 5'-direction to yield nucleoside 5'-phosphates.. Its function is as follows. Bidirectionally degrades single-stranded DNA into large acid-insoluble oligonucleotides, which are then degraded further into small acid-soluble oligonucleotides. The polypeptide is Exodeoxyribonuclease 7 large subunit (Streptococcus pneumoniae (strain ATCC BAA-255 / R6)).